A 360-amino-acid polypeptide reads, in one-letter code: Phosphoserine aminotransferase (360 aa).

An L-glutamate-binding site is contributed by R42. Pyridoxal 5'-phosphate contacts are provided by residues 76-77 (AS), W102, T152, D171, and Q194. At K195 the chain carries N6-(pyridoxal phosphate)lysine. 236-237 (NT) serves as a coordination point for pyridoxal 5'-phosphate.

Belongs to the class-V pyridoxal-phosphate-dependent aminotransferase family. SerC subfamily. Homodimer. Pyridoxal 5'-phosphate serves as cofactor.

It is found in the cytoplasm. It carries out the reaction O-phospho-L-serine + 2-oxoglutarate = 3-phosphooxypyruvate + L-glutamate. The catalysed reaction is 4-(phosphooxy)-L-threonine + 2-oxoglutarate = (R)-3-hydroxy-2-oxo-4-phosphooxybutanoate + L-glutamate. It participates in amino-acid biosynthesis; L-serine biosynthesis; L-serine from 3-phospho-D-glycerate: step 2/3. Its function is as follows. Catalyzes the reversible conversion of 3-phosphohydroxypyruvate to phosphoserine and of 3-hydroxy-2-oxo-4-phosphonooxybutanoate to phosphohydroxythreonine. This is Phosphoserine aminotransferase from Geobacillus kaustophilus (strain HTA426).